The primary structure comprises 1270 residues: Vigilin (1270 aa).

A compositionally biased stretch (polar residues) spans 1-11 (MSSVAVLTQES). Disordered stretches follow at residues 1–23 (MSSV…TQQQ) and 28–47 (ALNS…FPPL). 11 KH domains span residues 150–188 (ASAT…IPRP), 219–260 (DKRA…IPPP), 291–333 (KKKT…IPPT), 360–402 (ANSF…EFTE), 431–473 (INRT…IPPD), 504–545 (ENER…NFPD), 577–619 (VENS…LPGR), 651–693 (ANIT…FPTE), 724–766 (QTKS…FPTS), 798–840 (DNVV…LPTV), and 872–913 (EAQV…FPDR). The interval 911–947 (PDREENPAPVAEPALQENGEEGGEGKDGKDADPSSPR) is disordered. Over residues 933–947 (GEGKDGKDADPSSPR) the composition is skewed to basic and acidic residues. 3 consecutive KH domains span residues 970-1012 (ALVP…VPAP), 1051-1093 (ALRS…FPDK), and 1126-1168 (LEQM…FPQS). The segment at 1217-1270 (SHEESKVPSKGFVVRDAPCGTVNNEKAPDMSSSEDFPSFGAQVAPKTLPWGPKR) is disordered.

The protein resides in the cytoplasm. This is Vigilin (HDLBP) from Gallus gallus (Chicken).